We begin with the raw amino-acid sequence, 466 residues long: Phosphomethylpyrimidine synthase (466 aa).

Substrate is bound by residues asparagine 80, methionine 109, tyrosine 139, histidine 175, 195–197 (SRG), 236–239 (DSLR), and glutamate 275. Histidine 279 is a Zn(2+) binding site. Residue tyrosine 302 participates in substrate binding. Histidine 343 contacts Zn(2+). [4Fe-4S] cluster-binding residues include cysteine 423, cysteine 426, and cysteine 431.

This sequence belongs to the ThiC family. The cofactor is [4Fe-4S] cluster.

The enzyme catalyses 5-amino-1-(5-phospho-beta-D-ribosyl)imidazole + S-adenosyl-L-methionine = 4-amino-2-methyl-5-(phosphooxymethyl)pyrimidine + CO + 5'-deoxyadenosine + formate + L-methionine + 3 H(+). It participates in cofactor biosynthesis; thiamine diphosphate biosynthesis. Functionally, catalyzes the synthesis of the hydroxymethylpyrimidine phosphate (HMP-P) moiety of thiamine from aminoimidazole ribotide (AIR) in a radical S-adenosyl-L-methionine (SAM)-dependent reaction. The sequence is that of Phosphomethylpyrimidine synthase from Prochlorococcus marinus (strain NATL2A).